We begin with the raw amino-acid sequence, 306 residues long: MKRKYLKLMIGLALAATLTLSGCSLPGLSAAADQTIKIGAQSMSESEIIASMLGQLIEHHTDLKTTTIKNLGSNAVQQQALMNGEIDIAATRYTGDALTGTLRMEPEKDPDKALALTQREFKKRYDLKWYDSYGFDNTYAFTVSKELADQYHLETVSDVKKWAPQLKLGVDNYWMKLKGNGYQDFTKTYGMTFGGTYPMQIGLVYDAVKSGKMDIVLAYSTDGRIKSYGLKMLKDDKQFFPPYDCSPVVPEKVLKEHPELEGIIKKMLGKIDTATMQELNYEVDGNLKEPSVVAKEYLEKHRYFES.

Positions 1 to 22 (MKRKYLKLMIGLALAATLTLSG) are cleaved as a signal peptide. Residue C23 is the site of N-palmitoyl cysteine attachment. C23 carries the S-diacylglycerol cysteine lipid modification.

This sequence belongs to the OsmX family.

Its subcellular location is the cell membrane. Functionally, member of a high affinity multicomponent binding-protein-dependent transport system for choline. The sequence is that of Choline-binding protein (opuBC) from Bacillus subtilis (strain 168).